A 1028-amino-acid polypeptide reads, in one-letter code: Carbamoyl phosphate synthase large chain (1028 aa).

The tract at residues Met1–Glu409 is carboxyphosphate synthetic domain. ATP contacts are provided by Arg129, Arg169, Gly175, Gly176, Glu208, Val210, Glu215, Gly241, Val242, His243, Gln285, and Glu299. The region spanning Gln133–Val328 is the ATP-grasp 1 domain. Gln285, Glu299, and Asn301 together coordinate Mg(2+). 3 residues coordinate Mn(2+): Gln285, Glu299, and Asn301. The tract at residues Arg410 to Val549 is oligomerization domain. The interval Trp550–Gly933 is carbamoyl phosphate synthetic domain. The ATP-grasp 2 domain occupies His674–Val866. Residues Arg710, Arg750, Leu752, Glu757, Gly782, Val783, His784, Ser785, Gln825, and Glu837 each contribute to the ATP site. Mg(2+) is bound by residues Gln825, Glu837, and Asn839. Residues Gln825, Glu837, and Asn839 each contribute to the Mn(2+) site. In terms of domain architecture, MGS-like spans Gln934–Gly1028. The tract at residues Gln934–Gly1028 is allosteric domain.

This sequence belongs to the CarB family. Composed of two chains; the small (or glutamine) chain promotes the hydrolysis of glutamine to ammonia, which is used by the large (or ammonia) chain to synthesize carbamoyl phosphate. Tetramer of heterodimers (alpha,beta)4. The cofactor is Mg(2+). Mn(2+) is required as a cofactor.

It carries out the reaction hydrogencarbonate + L-glutamine + 2 ATP + H2O = carbamoyl phosphate + L-glutamate + 2 ADP + phosphate + 2 H(+). The catalysed reaction is hydrogencarbonate + NH4(+) + 2 ATP = carbamoyl phosphate + 2 ADP + phosphate + 2 H(+). Its pathway is amino-acid biosynthesis; L-arginine biosynthesis; carbamoyl phosphate from bicarbonate: step 1/1. It participates in pyrimidine metabolism; UMP biosynthesis via de novo pathway; (S)-dihydroorotate from bicarbonate: step 1/3. Large subunit of the glutamine-dependent carbamoyl phosphate synthetase (CPSase). CPSase catalyzes the formation of carbamoyl phosphate from the ammonia moiety of glutamine, carbonate, and phosphate donated by ATP, constituting the first step of 2 biosynthetic pathways, one leading to arginine and/or urea and the other to pyrimidine nucleotides. The large subunit (synthetase) binds the substrates ammonia (free or transferred from glutamine from the small subunit), hydrogencarbonate and ATP and carries out an ATP-coupled ligase reaction, activating hydrogencarbonate by forming carboxy phosphate which reacts with ammonia to form carbamoyl phosphate. This Thermus thermophilus (strain ATCC 27634 / DSM 579 / HB8) protein is Carbamoyl phosphate synthase large chain.